Here is a 304-residue protein sequence, read N- to C-terminus: tRNA dimethylallyltransferase (304 aa).

Residue Gly10 to Ser17 participates in ATP binding. Substrate is bound at residue Thr12–Ser17. An interaction with substrate tRNA region spans residues Asp35–Gln38.

The protein belongs to the IPP transferase family. In terms of assembly, monomer. Mg(2+) serves as cofactor.

The catalysed reaction is adenosine(37) in tRNA + dimethylallyl diphosphate = N(6)-dimethylallyladenosine(37) in tRNA + diphosphate. In terms of biological role, catalyzes the transfer of a dimethylallyl group onto the adenine at position 37 in tRNAs that read codons beginning with uridine, leading to the formation of N6-(dimethylallyl)adenosine (i(6)A). This is tRNA dimethylallyltransferase from Gloeothece citriformis (strain PCC 7424) (Cyanothece sp. (strain PCC 7424)).